A 301-amino-acid polypeptide reads, in one-letter code: MQTFAEISALREQIKTFKREGRRIAFVPTMGNLHEGHLTLVRKAREHADIVVVSIFVNPMQFDRADDLNNYPRTLEDDLSKLNGEAVELVFTPTPEMIYPEGLDKQTLVEVPSLSTMLEGASRPGHFRGVATVVTKLFNIVQPDVACFGEKDFQQLAIIRKMTTDLAMDIEIIGVPTVREMDGLAMSSRNGLLTIDERQRAPVLARTMRWISSAIRGGRDDFASIIEDASDQLRAAGLHPDEIFIRDARTLQAVNTESTQAVILMSAFLGKARLIDNQVVELVKDSKEEVDSIESESENSH.

30 to 37 provides a ligand contact to ATP; it reads MGNLHEGH. His-37 serves as the catalytic Proton donor. Residue Gln-61 participates in (R)-pantoate binding. Gln-61 is a beta-alanine binding site. 149-152 lines the ATP pocket; that stretch reads GEKD. (R)-pantoate is bound at residue Gln-155. Residues Val-178 and 186–189 contribute to the ATP site; that span reads MSSR.

Belongs to the pantothenate synthetase family. In terms of assembly, homodimer.

It localises to the cytoplasm. It catalyses the reaction (R)-pantoate + beta-alanine + ATP = (R)-pantothenate + AMP + diphosphate + H(+). It functions in the pathway cofactor biosynthesis; (R)-pantothenate biosynthesis; (R)-pantothenate from (R)-pantoate and beta-alanine: step 1/1. In terms of biological role, catalyzes the condensation of pantoate with beta-alanine in an ATP-dependent reaction via a pantoyl-adenylate intermediate. This Vibrio vulnificus (strain YJ016) protein is Pantothenate synthetase.